A 63-amino-acid polypeptide reads, in one-letter code: Cecropin-2 (63 aa).

The signal sequence occupies residues 1–23; sequence MNFYKVFIFVALILAISLGQSEA. Arg62 carries the arginine amide modification.

This sequence belongs to the cecropin family.

It is found in the secreted. In terms of biological role, cecropins have lytic and antibacterial activity against several Gram-positive and Gram-negative bacteria. This chain is Cecropin-2 (Cec2A), found in Drosophila virilis (Fruit fly).